The following is a 264-amino-acid chain: Type III pantothenate kinase (264 aa).

Residue 6-13 participates in ATP binding; it reads DSGNSRLK. Residues Y92 and 99–102 each bind substrate; that span reads GADR. D101 functions as the Proton acceptor in the catalytic mechanism. Residue T127 coordinates ATP. T177 lines the substrate pocket.

This sequence belongs to the type III pantothenate kinase family. Homodimer. NH4(+) is required as a cofactor. K(+) serves as cofactor.

The protein resides in the cytoplasm. It catalyses the reaction (R)-pantothenate + ATP = (R)-4'-phosphopantothenate + ADP + H(+). It participates in cofactor biosynthesis; coenzyme A biosynthesis; CoA from (R)-pantothenate: step 1/5. Catalyzes the phosphorylation of pantothenate (Pan), the first step in CoA biosynthesis. This Bordetella petrii (strain ATCC BAA-461 / DSM 12804 / CCUG 43448) protein is Type III pantothenate kinase.